The sequence spans 437 residues: Glutamyl-tRNA reductase (437 aa).

Residues T49–R52, S109, E114–Q116, and Q120 contribute to the substrate site. Residue C50 is the Nucleophile of the active site. G198 to S203 lines the NADP(+) pocket.

The protein belongs to the glutamyl-tRNA reductase family. In terms of assembly, homodimer.

The catalysed reaction is (S)-4-amino-5-oxopentanoate + tRNA(Glu) + NADP(+) = L-glutamyl-tRNA(Glu) + NADPH + H(+). Its pathway is porphyrin-containing compound metabolism; protoporphyrin-IX biosynthesis; 5-aminolevulinate from L-glutamyl-tRNA(Glu): step 1/2. The protein operates within porphyrin-containing compound metabolism; chlorophyll biosynthesis. Catalyzes the NADPH-dependent reduction of glutamyl-tRNA(Glu) to glutamate 1-semialdehyde (GSA). The chain is Glutamyl-tRNA reductase from Prochlorococcus marinus (strain SARG / CCMP1375 / SS120).